The sequence spans 469 residues: 3-isopropylmalate dehydratase large subunit (469 aa).

3 residues coordinate [4Fe-4S] cluster: cysteine 347, cysteine 410, and cysteine 413.

It belongs to the aconitase/IPM isomerase family. LeuC type 1 subfamily. As to quaternary structure, heterodimer of LeuC and LeuD. Requires [4Fe-4S] cluster as cofactor.

It carries out the reaction (2R,3S)-3-isopropylmalate = (2S)-2-isopropylmalate. It functions in the pathway amino-acid biosynthesis; L-leucine biosynthesis; L-leucine from 3-methyl-2-oxobutanoate: step 2/4. Functionally, catalyzes the isomerization between 2-isopropylmalate and 3-isopropylmalate, via the formation of 2-isopropylmaleate. The polypeptide is 3-isopropylmalate dehydratase large subunit (Burkholderia ambifaria (strain MC40-6)).